The primary structure comprises 726 residues: Procollagen-lysine,2-oxoglutarate 5-dioxygenase 1 (726 aa).

The first 18 residues, 1–18 (MRLLLLLAPLGWLLLAET), serve as a signal peptide directing secretion. 2 N-linked (GlcNAc...) asparagine glycosylation sites follow: asparagine 196 and asparagine 537. The Fe2OG dioxygenase domain maps to 635–726 (QFDLAFVVRY…RYIAVSFVDP (92 aa)). Histidine 655 and aspartate 657 together coordinate Fe cation. The N-linked (GlcNAc...) asparagine glycan is linked to asparagine 685. Histidine 707 contacts Fe cation. The active site involves arginine 717.

In terms of assembly, homodimer. Identified in a complex with P3H3 and P3H4. Fe(2+) is required as a cofactor. L-ascorbate serves as cofactor.

It localises to the rough endoplasmic reticulum membrane. It carries out the reaction L-lysyl-[collagen] + 2-oxoglutarate + O2 = (5R)-5-hydroxy-L-lysyl-[collagen] + succinate + CO2. Functionally, part of a complex composed of PLOD1, P3H3 and P3H4 that catalyzes hydroxylation of lysine residues in collagen alpha chains and is required for normal assembly and cross-linkling of collagen fibrils. Forms hydroxylysine residues in -Xaa-Lys-Gly- sequences in collagens. These hydroxylysines serve as sites of attachment for carbohydrate units and are essential for the stability of the intermolecular collagen cross-links. This is Procollagen-lysine,2-oxoglutarate 5-dioxygenase 1 (PLOD1) from Bos taurus (Bovine).